Here is a 183-residue protein sequence, read N- to C-terminus: Ferritin heavy chain (183 aa).

M1 carries the N-acetylmethionine modification. Position 2 is an N-acetylthreonine; in Ferritin heavy chain, N-terminally processed (T2). Residues 11–160 form the Ferritin-like diiron domain; that stretch reads QNYHQDSEAA…DHVTNLRKMG (150 aa). Fe cation-binding residues include E28, E63, H66, E108, and Q142. A phosphoserine mark is found at S179 and S183.

It belongs to the ferritin family. As to quaternary structure, oligomer of 24 subunits. There are two types of subunits: L (light) chain and H (heavy) chain. The major chain can be light or heavy, depending on the species and tissue type. The functional molecule forms a roughly spherical shell with a diameter of 12 nm and contains a central cavity into which the insoluble mineral iron core is deposited. Interacts with NCOA4; NCOA4 promotes targeting of the iron-binding ferritin complex to autolysosomes following starvation or iron depletion. In terms of tissue distribution, ubiquitous.

It is found in the cytoplasm. The protein localises to the lysosome. It localises to the cytoplasmic vesicle. Its subcellular location is the autophagosome. It carries out the reaction 4 Fe(2+) + O2 + 4 H(+) = 4 Fe(3+) + 2 H2O. Its function is as follows. Stores iron in a soluble, non-toxic, readily available form. Important for iron homeostasis. Has ferroxidase activity. Iron is taken up in the ferrous form and deposited as ferric hydroxides after oxidation. Also plays a role in delivery of iron to cells. Mediates iron uptake in capsule cells of the developing kidney. Delivery to lysosomes is mediated by the cargo receptor NCOA4 for autophagic degradation and release of iron. This is Ferritin heavy chain (FTH1) from Trichosurus vulpecula (Brush-tailed possum).